A 317-amino-acid polypeptide reads, in one-letter code: Transaldolase (317 aa).

Lys132 acts as the Schiff-base intermediate with substrate in catalysis.

This sequence belongs to the transaldolase family. Type 1 subfamily. Homodimer.

Its subcellular location is the cytoplasm. The catalysed reaction is D-sedoheptulose 7-phosphate + D-glyceraldehyde 3-phosphate = D-erythrose 4-phosphate + beta-D-fructose 6-phosphate. It participates in carbohydrate degradation; pentose phosphate pathway; D-glyceraldehyde 3-phosphate and beta-D-fructose 6-phosphate from D-ribose 5-phosphate and D-xylulose 5-phosphate (non-oxidative stage): step 2/3. In terms of biological role, transaldolase is important for the balance of metabolites in the pentose-phosphate pathway. In Haemophilus influenzae (strain 86-028NP), this protein is Transaldolase.